The primary structure comprises 117 residues: Large ribosomal subunit protein uL18 (117 aa).

This sequence belongs to the universal ribosomal protein uL18 family. As to quaternary structure, part of the 50S ribosomal subunit; part of the 5S rRNA/L5/L18/L25 subcomplex. Contacts the 5S and 23S rRNAs.

Functionally, this is one of the proteins that bind and probably mediate the attachment of the 5S RNA into the large ribosomal subunit, where it forms part of the central protuberance. This Halorhodospira halophila (strain DSM 244 / SL1) (Ectothiorhodospira halophila (strain DSM 244 / SL1)) protein is Large ribosomal subunit protein uL18.